A 422-amino-acid chain; its full sequence is Enolase (422 aa).

(2R)-2-phosphoglycerate is bound at residue Gln-161. Glu-203 acts as the Proton donor in catalysis. Residues Asp-240, Glu-283, and Asp-310 each coordinate Mg(2+). The (2R)-2-phosphoglycerate site is built by Lys-335, Arg-364, Ser-365, and Lys-386. Lys-335 (proton acceptor) is an active-site residue.

This sequence belongs to the enolase family. Mg(2+) serves as cofactor.

The protein resides in the cytoplasm. Its subcellular location is the secreted. The protein localises to the cell surface. The catalysed reaction is (2R)-2-phosphoglycerate = phosphoenolpyruvate + H2O. Its pathway is carbohydrate degradation; glycolysis; pyruvate from D-glyceraldehyde 3-phosphate: step 4/5. Its function is as follows. Catalyzes the reversible conversion of 2-phosphoglycerate (2-PG) into phosphoenolpyruvate (PEP). It is essential for the degradation of carbohydrates via glycolysis. This chain is Enolase, found in Deinococcus radiodurans (strain ATCC 13939 / DSM 20539 / JCM 16871 / CCUG 27074 / LMG 4051 / NBRC 15346 / NCIMB 9279 / VKM B-1422 / R1).